Consider the following 948-residue polypeptide: Zinc finger CCCH domain-containing protein 18 (948 aa).

Met1 carries the N-acetylmethionine modification. Residues 1–219 (MDVAESPELD…SDRKVRPRPT (219 aa)) are disordered. A Phosphoserine modification is found at Ser6. The segment covering 15–25 (EDEEQPALSDD) has biased composition (acidic residues). A phosphoserine mark is found at Ser33, Ser45, Ser58, Ser64, Ser71, Ser75, Ser80, and Ser92. Positions 70-86 (ASEPKSQDQDSEAHELS) are enriched in basic and acidic residues. Positions 95–105 (EEGDDVEEDGT) are enriched in acidic residues. Thr105 bears the Phosphothreonine mark. Ser106 and Ser114 each carry phosphoserine. The segment covering 106-120 (SDLRDEASSVTRELD) has biased composition (basic and acidic residues). Acidic residues-rich tracts occupy residues 121 to 132 (EHELDYDEEVPE) and 139 to 154 (QEEEAEKAGAEEEEEK). Ser169 is subject to Phosphoserine. Positions 177-186 (EAAKEKKKED) are enriched in basic and acidic residues. Residues 187 to 203 (DDGEIDDGEIDDDDLEE) show a composition bias toward acidic residues. Positions 204–213 (GEVKDPSDRK) are enriched in basic and acidic residues. The C3H1-type zinc finger occupies 215 to 241 (RPRPTCRFFMKGNCTWGMSCRFIHPGV). Gly245 bears the Omega-N-methylarginine mark. Disordered stretches follow at residues 272-296 (ANPWGGPVVDEILPPPPPEPPTESA) and 388-922 (YTEA…TLSR). Residues 392-480 (EPYHNYRERE…DREKDKEKPK (89 aa)) show a composition bias toward basic and acidic residues. Residues 395–460 (HNYRERERER…RERAKRDEKD (66 aa)) are a coiled coil. Phosphoserine is present on Ser483. A Glycyl lysine isopeptide (Lys-Gly) (interchain with G-Cter in SUMO2) cross-link involves residue Lys506. Residues 506–516 (KRADEWKDPWR) show a composition bias toward basic and acidic residues. Residues Ser528, Ser530, and Ser532 each carry the phosphoserine modification. Positions 541-602 (SASSASASNS…SRSRSFSSSP (62 aa)) are enriched in low complexity. Pro residues predominate over residues 603–612 (SPSPTPSPHR). Glycyl lysine isopeptide (Lys-Gly) (interchain with G-Cter in SUMO2) cross-links involve residues Lys618 and Lys657. A compositionally biased stretch (basic and acidic residues) spans 657–666 (KPGDLREARR). Low complexity-rich tracts occupy residues 688–721 (GSSYSGSSSRSRSLSVSSVSSVSSATSSSSSVHS) and 732–746 (ASPVSSASSRSPTPA). Residues 756-770 (KKEDGVREEKRRRDP) show a composition bias toward basic and acidic residues. The segment covering 774–804 (PPKSSKAPAGGKASQQAAAPQPAVPGQPQQG) has biased composition (low complexity). Lys810 is modified (N6-acetyllysine). A Glycyl lysine isopeptide (Lys-Gly) (interchain with G-Cter in SUMO2) cross-link involves residue Lys813. Residues 820–837 (AADKGSRKRYEPSDKDRQ) show a composition bias toward basic and acidic residues. Ser838, Ser847, Ser863, Ser888, and Ser891 each carry phosphoserine. A compositionally biased stretch (polar residues) spans 888–898 (SPQSKGSSKVT). Residues 902–919 (GKATDTATAGTKSGKAST) are compositionally biased toward low complexity. Lys903 participates in a covalent cross-link: Glycyl lysine isopeptide (Lys-Gly) (interchain with G-Cter in SUMO2). The stretch at 916-945 (KASTLSRREELLKQLKAVEDAIARKRAKIP) forms a coiled coil.

As to quaternary structure, interacts with ZFC3H1 in a RNase-insensitive manner.

It localises to the nucleus. The sequence is that of Zinc finger CCCH domain-containing protein 18 (Zc3h18) from Mus musculus (Mouse).